The following is a 131-amino-acid chain: Large ribosomal subunit protein bL21 (131 aa).

The segment at 111–131 (VAAATGTADARRAAHNASAKE) is disordered.

This sequence belongs to the bacterial ribosomal protein bL21 family. Part of the 50S ribosomal subunit. Contacts protein L20.

In terms of biological role, this protein binds to 23S rRNA in the presence of protein L20. The protein is Large ribosomal subunit protein bL21 of Cereibacter sphaeroides (strain ATCC 17029 / ATH 2.4.9) (Rhodobacter sphaeroides).